Here is a 117-residue protein sequence, read N- to C-terminus: UPF0102 protein Rsph17029_0461 (117 aa).

This sequence belongs to the UPF0102 family.

This chain is UPF0102 protein Rsph17029_0461, found in Cereibacter sphaeroides (strain ATCC 17029 / ATH 2.4.9) (Rhodobacter sphaeroides).